A 239-amino-acid polypeptide reads, in one-letter code: Phosphoribosylaminoimidazole-succinocarboxamide synthase (239 aa).

It belongs to the SAICAR synthetase family.

The catalysed reaction is 5-amino-1-(5-phospho-D-ribosyl)imidazole-4-carboxylate + L-aspartate + ATP = (2S)-2-[5-amino-1-(5-phospho-beta-D-ribosyl)imidazole-4-carboxamido]succinate + ADP + phosphate + 2 H(+). Its pathway is purine metabolism; IMP biosynthesis via de novo pathway; 5-amino-1-(5-phospho-D-ribosyl)imidazole-4-carboxamide from 5-amino-1-(5-phospho-D-ribosyl)imidazole-4-carboxylate: step 1/2. The chain is Phosphoribosylaminoimidazole-succinocarboxamide synthase from Acinetobacter baylyi (strain ATCC 33305 / BD413 / ADP1).